The sequence spans 117 residues: Probable non-functional immunoglobulin heavy variable 1-38-4 (117 aa).

The N-terminal stretch at 1–19 (MDWNWRILFLVVATTGAHS) is a signal peptide. Positions 20–44 (QVQLVQSWAEVRKSGASVKVSCSFS) are framework-1. An Ig-like domain is found at 20-117 (QVQLVQSWAE…EDMAVYYYAR (98 aa)). The interval 45–52 (GFTITSYG) is complementarity-determining-1. The segment at 53–69 (IHWVQQSPGQGLEWMGW) is framework-2. A complementarity-determining-2 region spans residues 70-77 (INPGNGSP). N-linked (GlcNAc...) asparagine glycosylation is present at asparagine 74. The segment at 78–115 (SYAKKFQGRFTMTRDMSTTTAYTDLSSLTSEDMAVYYY) is framework-3. The tract at residues 116 to 117 (AR) is complementarity-determining-3.

As to quaternary structure, most probably, the immunoglobulin is not assembled due to incorrect folding of heavy chain. Immunoglobulins are composed of two identical heavy chains and two identical light chains; disulfide-linked.

It is found in the secreted. It localises to the cell membrane. Functionally, probable non-functional open reading frame (ORF) of V region of the variable domain of immunoglobulin heavy chains. Non-functional ORF generally cannot participate in the synthesis of a productive immunoglobulin chain due to altered V-(D)-J or switch recombination and/or splicing site (at mRNA level) and/or conserved amino acid change (protein level). Immunoglobulins, also known as antibodies, are membrane-bound or secreted glycoproteins produced by B lymphocytes. In the recognition phase of humoral immunity, the membrane-bound immunoglobulins serve as receptors which, upon binding of a specific antigen, trigger the clonal expansion and differentiation of B lymphocytes into immunoglobulins-secreting plasma cells. Secreted immunoglobulins mediate the effector phase of humoral immunity, which results in the elimination of bound antigens. The antigen binding site is formed by the variable domain of one heavy chain, together with that of its associated light chain. Thus, each immunoglobulin has two antigen binding sites with remarkable affinity for a particular antigen. The variable domains are assembled by a process called V-(D)-J rearrangement and can then be subjected to somatic hypermutations which, after exposure to antigen and selection, allow affinity maturation for a particular antigen. The sequence is that of Probable non-functional immunoglobulin heavy variable 1-38-4 from Homo sapiens (Human).